The primary structure comprises 155 residues: 6,7-dimethyl-8-ribityllumazine synthase (155 aa).

Residues phenylalanine 24, 58–60 (AFE), and 82–84 (AVI) each bind 5-amino-6-(D-ribitylamino)uracil. 87–88 (ST) is a binding site for (2S)-2-hydroxy-3-oxobutyl phosphate. Histidine 90 (proton donor) is an active-site residue. A 5-amino-6-(D-ribitylamino)uracil-binding site is contributed by phenylalanine 115. (2S)-2-hydroxy-3-oxobutyl phosphate is bound at residue arginine 129.

Belongs to the DMRL synthase family.

It catalyses the reaction (2S)-2-hydroxy-3-oxobutyl phosphate + 5-amino-6-(D-ribitylamino)uracil = 6,7-dimethyl-8-(1-D-ribityl)lumazine + phosphate + 2 H2O + H(+). Its pathway is cofactor biosynthesis; riboflavin biosynthesis; riboflavin from 2-hydroxy-3-oxobutyl phosphate and 5-amino-6-(D-ribitylamino)uracil: step 1/2. In terms of biological role, catalyzes the formation of 6,7-dimethyl-8-ribityllumazine by condensation of 5-amino-6-(D-ribitylamino)uracil with 3,4-dihydroxy-2-butanone 4-phosphate. This is the penultimate step in the biosynthesis of riboflavin. The sequence is that of 6,7-dimethyl-8-ribityllumazine synthase from Acetivibrio thermocellus (strain ATCC 27405 / DSM 1237 / JCM 9322 / NBRC 103400 / NCIMB 10682 / NRRL B-4536 / VPI 7372) (Clostridium thermocellum).